Consider the following 415-residue polypeptide: Multifunctional CCA protein (415 aa).

2 residues coordinate ATP: G8 and R11. CTP is bound by residues G8 and R11. Residues E21 and D23 each contribute to the Mg(2+) site. The ATP site is built by R91, R137, and R140. R91, R137, and R140 together coordinate CTP. In terms of domain architecture, HD spans 228-329; the sequence is AGTHTLMALD…VELFEGLDLF (102 aa).

The protein belongs to the tRNA nucleotidyltransferase/poly(A) polymerase family. Bacterial CCA-adding enzyme type 1 subfamily. As to quaternary structure, monomer. Can also form homodimers and oligomers. Requires Mg(2+) as cofactor. The cofactor is Ni(2+).

It catalyses the reaction a tRNA precursor + 2 CTP + ATP = a tRNA with a 3' CCA end + 3 diphosphate. The catalysed reaction is a tRNA with a 3' CCA end + 2 CTP + ATP = a tRNA with a 3' CCACCA end + 3 diphosphate. Functionally, catalyzes the addition and repair of the essential 3'-terminal CCA sequence in tRNAs without using a nucleic acid template. Adds these three nucleotides in the order of C, C, and A to the tRNA nucleotide-73, using CTP and ATP as substrates and producing inorganic pyrophosphate. tRNA 3'-terminal CCA addition is required both for tRNA processing and repair. Also involved in tRNA surveillance by mediating tandem CCA addition to generate a CCACCA at the 3' terminus of unstable tRNAs. While stable tRNAs receive only 3'-terminal CCA, unstable tRNAs are marked with CCACCA and rapidly degraded. This chain is Multifunctional CCA protein, found in Halorhodospira halophila (strain DSM 244 / SL1) (Ectothiorhodospira halophila (strain DSM 244 / SL1)).